We begin with the raw amino-acid sequence, 343 residues long: Thromboxane A2 receptor (343 aa).

Topologically, residues 1-29 are extracellular; it reads MWPNASSLGPCFRPMNITLEERRLIASPW. N-linked (GlcNAc...) asparagine glycans are attached at residues Asn-4 and Asn-16. A helical membrane pass occupies residues 30–52; it reads FAASFCLVGLASNLLALSVLMGA. At 53 to 66 the chain is on the cytoplasmic side; that stretch reads RQGSSQSRSSFLTF. The chain crosses the membrane as a helical span at residues 67 to 87; the sequence is LCGLVLTDFMGLLVTGAIVVT. At 88-106 the chain is on the extracellular side; the sequence is QHFVLFEWQAVDPGCSLCH. The cysteines at positions 105 and 183 are disulfide-linked. A helical transmembrane segment spans residues 107–128; it reads FMGVIMVFFGLCPLLLGAAMAS. Residues 129–149 are Cytoplasmic-facing; that stretch reads ERFLGITRPFSRPATASQRRA. A helical transmembrane segment spans residues 150 to 172; that stretch reads WTTVGLVWASALALGLLPLLGVG. The Extracellular portion of the chain corresponds to 173-193; the sequence is HYTVQYPGSWCFLTLGTDPGD. The chain crosses the membrane as a helical span at residues 194-219; the sequence is VAFGLLFALLGSISVGMSFLLNTISV. The Cytoplasmic segment spans residues 220-246; that stretch reads ATLCHVYHGQATAQQRPRDCEVEMMVQ. Residues 247–270 form a helical membrane-spanning segment; the sequence is LMGIMVVASICWMPLLVFIAQTVL. Topologically, residues 271 to 289 are extracellular; the sequence is QSPPAMSPTGQLSRLTERQ. The chain crosses the membrane as a helical span at residues 290–311; it reads LLIYLRVATWNQILDPWVYILF. Residues 312-343 are Cytoplasmic-facing; sequence RRAVIQRFYPRLSTRSRSLSLQPQLTRRSTIH. Ser-329 and Ser-331 each carry phosphoserine.

It belongs to the G-protein coupled receptor 1 family. As to quaternary structure, interacts with RPGRIP1L. Interacts with RACK1; the interaction regulates TBXA2R cell surface expression.

It localises to the cell membrane. Its function is as follows. Receptor for thromboxane A2 (TXA2), a potent stimulator of platelet aggregation. The activity of this receptor is mediated by a G-protein that activates a phosphatidylinositol-calcium second messenger system. In the kidney, the binding of TXA2 to glomerular TP receptors causes intense vasoconstriction. Activates phospholipase C and adenylyl cyclase. The sequence is that of Thromboxane A2 receptor (TBXA2R) from Bos taurus (Bovine).